We begin with the raw amino-acid sequence, 290 residues long: Arylamine N-acetyltransferase 1 (290 aa).

At Met1 the chain carries N-acetylmethionine. Ser103 contributes to the CoA binding site. 106–107 (IH) contributes to the substrate binding site. Tyr208 serves as a coordination point for CoA.

The protein belongs to the arylamine N-acetyltransferase family.

Its subcellular location is the cytoplasm. The enzyme catalyses an arylamine + acetyl-CoA = an N-acetylarylamine + CoA. Its function is as follows. Participates in the detoxification of a plethora of hydrazine and arylamine drugs. The polypeptide is Arylamine N-acetyltransferase 1 (NAT1) (Bos taurus (Bovine)).